Here is a 201-residue protein sequence, read N- to C-terminus: U1 small nuclear ribonucleoprotein C (201 aa).

The segment at Y4–E36 adopts a Matrin-type zinc-finger fold. A compositionally biased stretch (low complexity) spans I137–K154. The tract at residues I137–D176 is disordered.

The protein belongs to the U1 small nuclear ribonucleoprotein C family. U1 snRNP is composed of the 7 core Sm proteins B/B', D1, D2, D3, E, F and G that assemble in a heptameric protein ring on the Sm site of the small nuclear RNA to form the core snRNP, and at least 3 U1 snRNP-specific proteins U1-70K, U1-A and U1-C. U1-C interacts with U1 snRNA and the 5' splice-site region of the pre-mRNA.

The protein localises to the nucleus. In terms of biological role, component of the spliceosomal U1 snRNP, which is essential for recognition of the pre-mRNA 5' splice-site and the subsequent assembly of the spliceosome. U1-C is directly involved in initial 5' splice-site recognition for both constitutive and regulated alternative splicing. The interaction with the 5' splice-site seems to precede base-pairing between the pre-mRNA and the U1 snRNA. Stimulates commitment or early (E) complex formation by stabilizing the base pairing of the 5' end of the U1 snRNA and the 5' splice-site region. The protein is U1 small nuclear ribonucleoprotein C of Plasmodium yoelii yoelii.